A 488-amino-acid chain; its full sequence is UDP-N-acetylmuramate--L-alanine ligase (488 aa).

126–132 (GTHGKTT) is an ATP binding site.

This sequence belongs to the MurCDEF family.

It is found in the cytoplasm. It catalyses the reaction UDP-N-acetyl-alpha-D-muramate + L-alanine + ATP = UDP-N-acetyl-alpha-D-muramoyl-L-alanine + ADP + phosphate + H(+). Its pathway is cell wall biogenesis; peptidoglycan biosynthesis. Functionally, cell wall formation. In Cronobacter sakazakii (strain ATCC BAA-894) (Enterobacter sakazakii), this protein is UDP-N-acetylmuramate--L-alanine ligase.